The sequence spans 206 residues: Large ribosomal subunit protein uL3 (206 aa).

Residues V122 to R154 form a disordered region.

This sequence belongs to the universal ribosomal protein uL3 family. As to quaternary structure, part of the 50S ribosomal subunit. Forms a cluster with proteins L14 and L19.

One of the primary rRNA binding proteins, it binds directly near the 3'-end of the 23S rRNA, where it nucleates assembly of the 50S subunit. In Leptospira borgpetersenii serovar Hardjo-bovis (strain JB197), this protein is Large ribosomal subunit protein uL3.